We begin with the raw amino-acid sequence, 336 residues long: Dihydroorotate dehydrogenase (quinone) (336 aa).

FMN is bound by residues 62-66 (AGLDK) and Thr86. Lys66 is a substrate binding site. Position 111-115 (111-115 (NRMGF)) interacts with substrate. Residues Asn139 and Asn172 each coordinate FMN. A substrate-binding site is contributed by Asn172. The active-site Nucleophile is the Ser175. Asn177 is a substrate binding site. Lys217 and Thr245 together coordinate FMN. 246-247 (NT) provides a ligand contact to substrate. Residues Gly268, Gly297, and 318–319 (YS) each bind FMN.

Belongs to the dihydroorotate dehydrogenase family. Type 2 subfamily. In terms of assembly, monomer. FMN serves as cofactor.

The protein resides in the cell membrane. The catalysed reaction is (S)-dihydroorotate + a quinone = orotate + a quinol. The protein operates within pyrimidine metabolism; UMP biosynthesis via de novo pathway; orotate from (S)-dihydroorotate (quinone route): step 1/1. In terms of biological role, catalyzes the conversion of dihydroorotate to orotate with quinone as electron acceptor. The chain is Dihydroorotate dehydrogenase (quinone) from Cronobacter sakazakii (strain ATCC BAA-894) (Enterobacter sakazakii).